The sequence spans 69 residues: Large ribosomal subunit protein uL29 (69 aa).

It belongs to the universal ribosomal protein uL29 family.

This is Large ribosomal subunit protein uL29 from Synechococcus sp. (strain CC9902).